The sequence spans 511 residues: MRWISRPGWPGHLLALAAGALTPLALAPFVYWPLAILSIALLYLGLRGLPGKSALWRGWWYGFGAFGAGTSWIYVSIHDYGAASVPLASFLMLGFTAGVAFFFALPAWLWARCLRRDNAPLGDALAFAALWLALELFRSWFLTGFPWLYAGYSQLQGPLAGLVPVGGVWLSSFVIALSAALLVNLPRLFPHGASLLLGLVLLLGPWAAGLYLKGHAWTHSAGEPLRVVAIQGNIAQELKWDPNQVRAQLDLYRDLSLPQQDVDLIVWPETAVPILQDMASGYLGAMGQVADEKNAALITGVPVRERLADGKSRYFNGITVVGEGAGTYLKQKLVPFGEYVPLQDLLRGLIAFFDLPMSDFARGPADQPLLKAKGYEIAPYICYEVVYPEFAAALAAQSQVLLTVSNDTWFGTSIGPLQHLQMAQMRALESGRWMIRATNNGVTGLIDPYGRIVRQIPQFQQGILRGEVIPMQGLTPYLQYRVWPLAGLAGVLLLWALLGRQLRPQERRLFG.

The next 6 helical transmembrane spans lie at leucine 24–leucine 44, glycine 58–histidine 78, phenylalanine 90–tryptophan 110, leucine 125–phenylalanine 145, valine 163–valine 183, and glycine 192–leucine 212. Positions isoleucine 230 to proline 470 constitute a CN hydrolase domain. The active-site Proton acceptor is glutamate 269. Lysine 330 is an active-site residue. Cysteine 382 acts as the Nucleophile in catalysis. The chain crosses the membrane as a helical span at residues valine 482–leucine 502.

This sequence belongs to the CN hydrolase family. Apolipoprotein N-acyltransferase subfamily.

It is found in the cell inner membrane. The enzyme catalyses N-terminal S-1,2-diacyl-sn-glyceryl-L-cysteinyl-[lipoprotein] + a glycerophospholipid = N-acyl-S-1,2-diacyl-sn-glyceryl-L-cysteinyl-[lipoprotein] + a 2-acyl-sn-glycero-3-phospholipid + H(+). It participates in protein modification; lipoprotein biosynthesis (N-acyl transfer). Functionally, catalyzes the phospholipid dependent N-acylation of the N-terminal cysteine of apolipoprotein, the last step in lipoprotein maturation. This Pseudomonas aeruginosa (strain UCBPP-PA14) protein is Apolipoprotein N-acyltransferase.